The sequence spans 473 residues: MKTDTSTFLAQQIVRLRRRDQIRRLMQRDKTPLAILFMAAVVGTLTGLVGVAFEKAVSWVQNMRIGALVQVADHAFLLWPLAFILSALLAMVGYFLVRKFAPEAGGSGIPEIEGALEELRPVRWWRVLPVKFIGGMGTLGAGMVLGREGPTVQIGGNLGRMVLDVFRMRSAEARHTLLATGAAAGLSAAFNAPLAGILFIIEEMRPQFRYNLISIKAVFTGVIMSSIVFRIFNGEAPIIEVGKLSDAPVNTLWLYLILGIIFGCVGPVFNSLVLRTQDMFQRFHGGEIKKWVLMGGAIGGLCGILGLIEPEAAGGGFNLIPIAAAGNFSVGLLLFIFITRVVTTLLCFSSGAPGGIFAPMLALGTLLGTAFGMAAAVLFPQYHLEAGTFAIAGMGALMAASVRAPLTGIVLVLEMTDNYQLILPMIITCLGATLLAQFLGGKPLYSTILARTLAKQDAEQAAKNQNASAGENT.

Residues 1 to 32 (MKTDTSTFLAQQIVRLRRRDQIRRLMQRDKTP) are Cytoplasmic-facing. The chain crosses the membrane as a helical span at residues 33–69 (LAILFMAAVVGTLTGLVGVAFEKAVSWVQNMRIGALV). The Periplasmic segment spans residues 70–76 (QVADHAF). Residues 77–100 (LLWPLAFILSALLAMVGYFLVRKF) traverse the membrane as a helical segment. The Selectivity filter part_1 signature appears at 106–110 (GSGIP). Ser107 serves as a coordination point for chloride. The helical intramembrane region spans 109 to 116 (IPEIEGAL). The Cytoplasmic portion of the chain corresponds to 117–123 (EELRPVR). The next 2 helical transmembrane spans lie at 124 to 141 (WWRV…TLGA) and 148 to 166 (EGPT…LDVF). The Selectivity filter part_2 motif lies at 146-150 (GREGP). At 167–176 (RMRSAEARHT) the chain is on the cytoplasmic side. Intramembrane regions (helical) lie at residues 177-189 (LLAT…LSAA) and 193-201 (PLAGILFII). Residues 202–214 (EEMRPQFRYNLIS) are Cytoplasmic-facing. Residues 215–232 (IKAVFTGVIMSSIVFRIF) traverse the membrane as a helical segment. The Periplasmic segment spans residues 233 to 252 (NGEAPIIEVGKLSDAPVNTL). A helical membrane pass occupies residues 253-281 (WLYLILGIIFGCVGPVFNSLVLRTQDMFQ). At 282-287 (RFHGGE) the chain is on the cytoplasmic side. The helical transmembrane segment at 288 to 309 (IKKWVLMGGAIGGLCGILGLIE) threads the bilayer. Residues 310-329 (PEAAGGGFNLIPIAAAGNFS) lie on the Periplasmic side of the membrane. Helical transmembrane passes span 330-349 (VGLL…LCFS) and 355-376 (GIFA…MAAA). The Selectivity filter part_3 motif lies at 355-359 (GIFAP). Chloride-binding residues include Ile356 and Phe357. The Periplasmic portion of the chain corresponds to 377 to 386 (VLFPQYHLEA). The segment at residues 387 to 401 (GTFAIAGMGALMAAS) is an intramembrane region (helical). Positions 402 to 404 (VRA) form an intramembrane region, note=Loop between two helices. The segment at residues 405–416 (PLTGIVLVLEMT) is an intramembrane region (helical). Positions 417-421 (DNYQL) form an intramembrane region, note=Loop between two helices. The helical transmembrane segment at 422-438 (ILPMIITCLGATLLAQF) threads the bilayer. The Cytoplasmic portion of the chain corresponds to 439–473 (LGGKPLYSTILARTLAKQDAEQAAKNQNASAGENT). Tyr445 serves as a coordination point for chloride.

The protein belongs to the chloride channel (TC 2.A.49) family. ClcA subfamily. In terms of assembly, homodimer.

It localises to the cell inner membrane. It catalyses the reaction 2 chloride(in) + H(+)(out) = 2 chloride(out) + H(+)(in). In terms of biological role, proton-coupled chloride transporter. Functions as antiport system and exchanges two chloride ions for 1 proton. Probably acts as an electrical shunt for an outwardly-directed proton pump that is linked to amino acid decarboxylation, as part of the extreme acid resistance (XAR) response. This chain is H(+)/Cl(-) exchange transporter ClcA, found in Salmonella choleraesuis (strain SC-B67).